An 80-amino-acid polypeptide reads, in one-letter code: Moroidotoxin A (80 aa).

The first 27 residues, 1–27 (MAAVKKHLRFALVAAITIALLVAGSVA), serve as a signal peptide directing secretion. Positions 28–44 (DESSEDIDNIVIKTPLD) are excised as a propeptide. 3 disulfide bridges follow: Cys-48/Cys-65, Cys-53/Cys-67, and Cys-61/Cys-76.

This sequence belongs to the gympietide family. As to expression, expressed in trichomes, that are stiff epidermal hairs located on the surface of petioles and leaves. Not expressed in other aerial parts.

It is found in the secreted. Its function is as follows. Neurotoxin certainly responsible for the defensive, persistent, and painful stings of the giant stinging tree. Inhibits inactivation of Nav1.7/SCN9A sodium channel in sensory neurons by directly interacting with TMEM233, a newly described Nav-interacting protein. Has virtually no effect on Nav1.7/SCN9A function in heterologous expression systems and in neurons that do not express TMEM233. Also weakly but significantly affects Nav1.8/SCN10A. Coexpression of TMEM233 with Nav also confers ExTxA sensitivity to Nav1.1-Nav1.6. On the Nav1.7/SCN9A channel, causes a significant hyperpolarizing shift in the voltage dependence of activation. Its effects on Nav currents are irreversible, with no apparent reduction in activity even after repeated wash steps over 30 minutes. In vivo, induces nocifensive behavior in mice (licking or biting and shaking or lifting of the affected paw) lasting for approximately 1 hour. The chain is Moroidotoxin A from Dendrocnide moroides (Gympie stinging tree).